A 72-amino-acid polypeptide reads, in one-letter code: Translation initiation factor IF-1 (72 aa).

The region spanning 1–72 (MAKEESIEIE…SKGRITYRYK (72 aa)) is the S1-like domain.

It belongs to the IF-1 family. In terms of assembly, component of the 30S ribosomal translation pre-initiation complex which assembles on the 30S ribosome in the order IF-2 and IF-3, IF-1 and N-formylmethionyl-tRNA(fMet); mRNA recruitment can occur at any time during PIC assembly.

The protein localises to the cytoplasm. Functionally, one of the essential components for the initiation of protein synthesis. Stabilizes the binding of IF-2 and IF-3 on the 30S subunit to which N-formylmethionyl-tRNA(fMet) subsequently binds. Helps modulate mRNA selection, yielding the 30S pre-initiation complex (PIC). Upon addition of the 50S ribosomal subunit IF-1, IF-2 and IF-3 are released leaving the mature 70S translation initiation complex. This Chlorobium phaeovibrioides (strain DSM 265 / 1930) (Prosthecochloris vibrioformis (strain DSM 265)) protein is Translation initiation factor IF-1.